The following is a 494-amino-acid chain: UPF0371 protein STER_1332 (494 aa).

Belongs to the UPF0371 family.

In Streptococcus thermophilus (strain ATCC BAA-491 / LMD-9), this protein is UPF0371 protein STER_1332.